We begin with the raw amino-acid sequence, 534 residues long: CTP synthase (534 aa).

The amidoligase domain stretch occupies residues 1 to 267 (MTKYIFVTGG…DQIVCDHLKL (267 aa)). Serine 13 contributes to the CTP binding site. UTP is bound at residue serine 13. ATP is bound at residue 14-19 (SIGKGI). Tyrosine 54 contributes to the L-glutamine binding site. Aspartate 71 serves as a coordination point for ATP. Residues aspartate 71 and glutamate 141 each contribute to the Mg(2+) site. CTP-binding positions include 148–150 (DIE), 188–193 (KTKPTQ), and lysine 224. Residues 188-193 (KTKPTQ) and lysine 224 each bind UTP. Positions 292 to 534 (KIALVGKYVE…FVTAAVENMK (243 aa)) constitute a Glutamine amidotransferase type-1 domain. Glycine 354 provides a ligand contact to L-glutamine. Catalysis depends on cysteine 381, which acts as the Nucleophile; for glutamine hydrolysis. L-glutamine is bound by residues 382–385 (LGMQ), glutamate 405, and arginine 463. Residues histidine 508 and glutamate 510 contribute to the active site.

The protein belongs to the CTP synthase family. In terms of assembly, homotetramer.

The enzyme catalyses UTP + L-glutamine + ATP + H2O = CTP + L-glutamate + ADP + phosphate + 2 H(+). It catalyses the reaction L-glutamine + H2O = L-glutamate + NH4(+). It carries out the reaction UTP + NH4(+) + ATP = CTP + ADP + phosphate + 2 H(+). It functions in the pathway pyrimidine metabolism; CTP biosynthesis via de novo pathway; CTP from UDP: step 2/2. With respect to regulation, allosterically activated by GTP, when glutamine is the substrate; GTP has no effect on the reaction when ammonia is the substrate. The allosteric effector GTP functions by stabilizing the protein conformation that binds the tetrahedral intermediate(s) formed during glutamine hydrolysis. Inhibited by the product CTP, via allosteric rather than competitive inhibition. In terms of biological role, catalyzes the ATP-dependent amination of UTP to CTP with either L-glutamine or ammonia as the source of nitrogen. Regulates intracellular CTP levels through interactions with the four ribonucleotide triphosphates. In Streptococcus agalactiae serotype V (strain ATCC BAA-611 / 2603 V/R), this protein is CTP synthase.